The sequence spans 306 residues: Tricarboxylate transporter FUM11 (306 aa).

Solcar repeat units lie at residues 18–98 (SDTL…YQKL), 109–195 (FGIL…LKQV), and 206–292 (IGTV…VVEG). A run of 6 helical transmembrane segments spans residues 24 to 44 (LVAG…AEFA), 67 to 87 (GLQW…KTSI), 113 to 133 (LAGF…SERI), 170 to 189 (GFWP…LGSY), 209 to 229 (VKTF…TQPL), and 267 to 286 (GAVA…FMVY).

It belongs to the mitochondrial carrier (TC 2.A.29) family.

It localises to the mitochondrion inner membrane. It participates in mycotoxin biosynthesis. Functionally, tricarboxylate transporter; part of the gene cluster that mediates the biosynthesis of fumonisins B1 (FB1), B2 (FB2), B3 (FB3), and B4 (FB4), which are carcinogenic mycotoxins. Within the pathway, FUM11 is involved the addition of the tricarballylic moieties to the carbon backbone. FUM11 makes a tricarboxylic acid precursor available for fumonisin biosynthesis via its export from the mitochondria. The biosynthesis starts with the FUM1-catalyzed carbon chain assembly from one molecule of acetyl-CoA, eight molecules of malonyl-CoA, and two molecules of methionine (in S-adenosyl form). The C18 polyketide chain is released from the enzyme by a nucleophilic attack of a carbanion, which is derived from R-carbon of alanine by decarboxylation, on the carbonyl carbon of polyketide acyl chain. This step is catalyzed by the pyridoxal 5'-phosphate-dependent aminoacyl transferase FUM8. The resultant 3-keto intermediate is then stereospecifically reduced to a 3-hydroxyl product by reductase FUM13. Subsequent oxidations at C-10 by the cytochrome P450 monooxygenase FUM2, C-14 and C-15 by FUM6, FUM12 or FUM15, tricarballylic esterification of the hydroxyl groups on C-14 and C-15 by acyltransferase FUM14, and C-5 hydroxylation by 2-keto-glutarate-dependent dioxygenase FUM3 furnish the biosynthesis of fumonisins. The tricarballylic moieties are most likely derived from the citric acid cycle, and their addition to the carbon backbone may involve FUM7, FUM10, FUM11 and FUM14. The protein is Tricarboxylate transporter FUM11 of Gibberella moniliformis (strain M3125 / FGSC 7600) (Maize ear and stalk rot fungus).